The primary structure comprises 802 residues: Exocyst complex component 6 (802 aa).

Belongs to the SEC15 family. As to quaternary structure, the exocyst complex is composed of EXOC1, EXOC2, EXOC3, EXOC4, EXOC5, EXOC6, EXOC7 and EXOC8. Interacts with CNTRL. Interacts with RAB11A in a GTP-dependent manner.

The protein localises to the cytoplasm. The protein resides in the perinuclear region. Its subcellular location is the cell projection. It is found in the growth cone. It localises to the midbody. The protein localises to the midbody ring. Its function is as follows. Component of the exocyst complex involved in the docking of exocytic vesicles with fusion sites on the plasma membrane. Together with RAB11A, RAB3IP, RAB8A, PARD3, PRKCI, ANXA2, CDC42 and DNMBP promotes transcytosis of PODXL to the apical membrane initiation sites (AMIS), apical surface formation and lumenogenesis. This is Exocyst complex component 6 (Exoc6) from Mus musculus (Mouse).